Reading from the N-terminus, the 279-residue chain is 4-diphosphocytidyl-2-C-methyl-D-erythritol kinase (279 aa).

The active site involves Lys-10. An ATP-binding site is contributed by 91–101 (PVASGIGGGSA). Asp-130 is a catalytic residue.

It belongs to the GHMP kinase family. IspE subfamily.

The enzyme catalyses 4-CDP-2-C-methyl-D-erythritol + ATP = 4-CDP-2-C-methyl-D-erythritol 2-phosphate + ADP + H(+). Its pathway is isoprenoid biosynthesis; isopentenyl diphosphate biosynthesis via DXP pathway; isopentenyl diphosphate from 1-deoxy-D-xylulose 5-phosphate: step 3/6. Its function is as follows. Catalyzes the phosphorylation of the position 2 hydroxy group of 4-diphosphocytidyl-2C-methyl-D-erythritol. In Ruegeria pomeroyi (strain ATCC 700808 / DSM 15171 / DSS-3) (Silicibacter pomeroyi), this protein is 4-diphosphocytidyl-2-C-methyl-D-erythritol kinase.